Here is a 421-residue protein sequence, read N- to C-terminus: AA11 family lytic polysaccharide monooxygenase (421 aa).

A signal peptide spans 1 to 19 (MFSKAFLSAALLGAAAVEG). 3 residues coordinate Cu(+): His-20, His-79, and Glu-93. 3 cysteine pairs are disulfide-bonded: Cys-48-Cys-162, Cys-84-Cys-110, and Cys-201-Cys-235. Asn-117 carries an N-linked (GlcNAc...) asparagine glycan. The disordered stretch occupies residues 231 to 349 (GSQACTGTPT…SSSSSSSGAL (119 aa)). A compositionally biased stretch (low complexity) spans 247–285 (TAGSSGSSGSSSGSSSGGSSSSAAGSGATAPPAPAVSST). Over residues 304 to 314 (SPAQPTHTSAP) the composition is skewed to polar residues. The span at 315–349 (SGGSSSGSGSSSGSNSGSSSGSSSSSSSSSSSGAL) shows a compositional bias: low complexity.

This sequence belongs to the polysaccharide monooxygenase AA11 family. Cu(2+) serves as cofactor.

Its function is as follows. Lytic polysaccharide monooxygenase (LPMO) that depolymerizes chitin via the oxidation of scissile beta-(1-4)-glycosidic bonds, yielding C1 or C4 oxidation products. Catalysis by LPMOs requires the reduction of the active-site copper from Cu(II) to Cu(I) by a reducing agent and H(2)O(2) or O(2) as a cosubstrate. Active on chitin but has no activity on other substrates, including diverse mannans, cellulose and starch (data not shown). Primary chain cleavage yields predominantly aldonic acid oligosaccharides with even-numbered degrees of polymerization. The protein is AA11 family lytic polysaccharide monooxygenase of Aspergillus oryzae (strain ATCC 42149 / RIB 40) (Yellow koji mold).